A 120-amino-acid polypeptide reads, in one-letter code: Large ribosomal subunit protein uL18 (120 aa).

The protein belongs to the universal ribosomal protein uL18 family. In terms of assembly, part of the 50S ribosomal subunit; part of the 5S rRNA/L5/L18/L25 subcomplex. Contacts the 5S and 23S rRNAs.

Its function is as follows. This is one of the proteins that bind and probably mediate the attachment of the 5S RNA into the large ribosomal subunit, where it forms part of the central protuberance. In Clostridium novyi (strain NT), this protein is Large ribosomal subunit protein uL18.